A 547-amino-acid chain; its full sequence is Glucose-6-phosphate isomerase 2 (547 aa).

Residue Glu-351 is the Proton donor of the active site. Active-site residues include His-382 and Lys-508.

This sequence belongs to the GPI family.

It localises to the cytoplasm. The catalysed reaction is alpha-D-glucose 6-phosphate = beta-D-fructose 6-phosphate. The protein operates within carbohydrate biosynthesis; gluconeogenesis. It participates in carbohydrate degradation; glycolysis; D-glyceraldehyde 3-phosphate and glycerone phosphate from D-glucose: step 2/4. In terms of biological role, catalyzes the reversible isomerization of glucose-6-phosphate to fructose-6-phosphate. In Neisseria gonorrhoeae (strain ATCC 700825 / FA 1090), this protein is Glucose-6-phosphate isomerase 2.